Consider the following 101-residue polypeptide: Small ribosomal subunit protein uS14 (101 aa).

The protein belongs to the universal ribosomal protein uS14 family. As to quaternary structure, part of the 30S ribosomal subunit. Contacts proteins S3 and S10.

In terms of biological role, binds 16S rRNA, required for the assembly of 30S particles and may also be responsible for determining the conformation of the 16S rRNA at the A site. The sequence is that of Small ribosomal subunit protein uS14 from Saccharophagus degradans (strain 2-40 / ATCC 43961 / DSM 17024).